We begin with the raw amino-acid sequence, 102 residues long: Small ribosomal subunit protein uS10 (102 aa).

Belongs to the universal ribosomal protein uS10 family. In terms of assembly, part of the 30S ribosomal subunit.

In terms of biological role, involved in the binding of tRNA to the ribosomes. This is Small ribosomal subunit protein uS10 from Clostridium botulinum (strain ATCC 19397 / Type A).